The primary structure comprises 981 residues: Protein deadlock (981 aa).

The required for interaction with rhi/rhino stretch occupies residues 1–60; the sequence is MEKLDKIRMSQKLSCWQHILTTLGTSSKTEQEWNTFFKGFLESWRKPYCIQTSCDPSIPL. Disordered stretches follow at residues 72–195, 274–307, 327–352, 375–446, 554–586, and 642–662; these read LQEN…ACAP, IMDK…DDQL, SRNE…NKKE, LRKS…PNNI, GLDD…ETLK, and LVHQ…TAAR. Polar residues-rich tracts occupy residues 104 to 113 and 150 to 160; these read PSKSHSTGST and NHTTSIFSKAQ. Basic and acidic residues predominate over residues 167–191; sequence KLSSTKKRPDTCAPTDDSRKNREPR. Basic and acidic residues predominate over residues 337–352; the sequence is EKVKLKGERPAQNKKE. The segment covering 377-390 has biased composition (basic residues); sequence KSVKKSAKQQKPRV. A compositionally biased stretch (basic and acidic residues) spans 409–419; sequence TQDKQSTHEMI. Residues 422–446 show a composition bias toward polar residues; sequence QAKTISEASGQQTSQVQSSLSPNNI. The segment covering 652-662 has biased composition (basic and acidic residues); the sequence is RNQRDEATAAR.

Component of the Rhino-Deadlock-Cutoff (RDC) complex, composed of rhi/rhino, del/deadlock and cuff/cutoff. Interacts (via N-terminus) with rhi/rhino (via C-terminus); this interaction is direct. Interacts (via C-terminus) with cuff/cutoff; this interaction is direct.

The protein resides in the nucleus. The protein localises to the cytoplasm. It is found in the cytoskeleton. Its subcellular location is the microtubule organizing center. It localises to the centrosome. The protein resides in the chromosome. In terms of biological role, developmental protein involved in oogenesis. Required for germline maintenance, stability of mitotic spindles, localization of patterning determinants, oocyte growth and fusome biogenesis in males and females. Also required for dorso-ventral and antero-posterior patterning of oocyte and eggshell. May be involved in microtubule function during oogenesis. Part of a rhi-dependent transcription machinery that enables the generation of piRNA precursors from heterochromatin while maintaining the suppression of transposon-encoded promoters and enhancers. Component of the RDC complex (rhi, del and cuff) which binds to repressive H3K9me3 marks in the piRNA clusters. RDC promotes the bidirectional transcription of piRNA clusters at these sites by interacting with Moonshiner which forms a complex with the transcription initiation factors TfIIA-S and Trf2. This mechanism allows transcription to occur in piRNA clusters despite the lack of proper promoter elements and in the presence of the repressive H3K9me3 mark. As part of the RDC complex, involved in suppression of splicing. The sequence is that of Protein deadlock (del) from Drosophila melanogaster (Fruit fly).